The primary structure comprises 486 residues: Elastin-binding protein EbpS (486 aa).

A compositionally biased stretch (basic and acidic residues) spans 1–40 (MSNNFKDDFEKNRQSIDTNSHQDHTEDVEKDQSELEHQDT). Positions 1-314 (MSNNFKDDFE…NHDRDKERKK (314 aa)) are disordered. Over 2-204 (SNNFKDDFEK…ESKDHHSGKK (203 aa)) the chain is Extracellular. An elastin-binding region spans residues 14 to 34 (QSIDTNSHQDHTEDVEKDQSE). A compositionally biased stretch (polar residues) spans 64–85 (TNHNKQVHNESQTSEDNVQNEA). Composition is skewed to basic and acidic residues over residues 103 to 118 (EPSH…EEYY) and 126 to 149 (DKSH…ENNT). The segment covering 150–166 (EHSTVSDKSIAEQSQQP) has biased composition (polar residues). Residues 180-199 (SKDKHDDVTVKQDKDESKDH) show a composition bias toward basic and acidic residues. Low complexity-rich tracts occupy residues 204–225 (KGAA…MGVS) and 233–246 (DAQN…SNNS). Residues 205–225 (GAAIGAGTAGVAGAAGAMGVS) form a helical membrane-spanning segment. Over 226–319 (KAKKHSNDAQ…KERKKGGMAK (94 aa)) the chain is Cytoplasmic. Over residues 247–259 (TEDKASQDKSKDH) the composition is skewed to basic and acidic residues. A compositionally biased stretch (low complexity) spans 278–297 (GAASKSASAASKPHASNNAS). A compositionally biased stretch (basic and acidic residues) spans 299–314 (NHDEHDNHDRDKERKK). A helical transmembrane segment spans residues 320 to 340 (VLLPLIAAVLIIGALAIFGGM). The Extracellular portion of the chain corresponds to 341-486 (ALNNHNNGTK…IRNGQQIVIP (146 aa)). Residues 351-440 (ENKIANTNKN…QRQGGGQRHT (90 aa)) form a disordered region. Over residues 361–398 (NADESKDKDTSKDASKDKSKSTDSDKSKEDQDKATKDE) the composition is skewed to basic and acidic residues. Low complexity predominate over residues 403-431 (QNNANQANNQAQNNQNQQQANQNQQQQQQ). The region spanning 437 to 485 (QRHTVNGQENLYRIAIQYYGSGSPENVEKIRRANGLSGNNIRNGQQIVI) is the LysM domain.

The protein localises to the cell membrane. Functionally, promotes binding of soluble elastin peptides and tropoelastin to S.aureus cells although it is not able to promote bacterial adherence to immobilized elastin and, therefore, is not a microbial surface component recognizing adhesive matrix molecule (MSCRAMM). In Staphylococcus aureus (strain Mu50 / ATCC 700699), this protein is Elastin-binding protein EbpS (ebpS).